The sequence spans 290 residues: Diaminopimelate epimerase (290 aa).

Substrate-binding residues include Asn14 and Asn67. Cys76 functions as the Proton donor in the catalytic mechanism. Substrate-binding positions include 77–78 (GN), Asn166, Asn199, and 217–218 (ER). Catalysis depends on Cys226, which acts as the Proton acceptor. 227–228 (GT) contributes to the substrate binding site.

It belongs to the diaminopimelate epimerase family. As to quaternary structure, homodimer.

It is found in the cytoplasm. The catalysed reaction is (2S,6S)-2,6-diaminopimelate = meso-2,6-diaminopimelate. It functions in the pathway amino-acid biosynthesis; L-lysine biosynthesis via DAP pathway; DL-2,6-diaminopimelate from LL-2,6-diaminopimelate: step 1/1. In terms of biological role, catalyzes the stereoinversion of LL-2,6-diaminopimelate (L,L-DAP) to meso-diaminopimelate (meso-DAP), a precursor of L-lysine and an essential component of the bacterial peptidoglycan. This Geobacillus thermodenitrificans (strain NG80-2) protein is Diaminopimelate epimerase.